A 185-amino-acid polypeptide reads, in one-letter code: MGQQVLKSSNEKMEKAVAAYSRELATVRAGRASSSVLDKVQVDYYGAPTPVVQLANITVPEARLLVIQPYDKTSIGDIEKAILKADLGLNPSNDGTVIRIAFPALTEERRRDLVKVVKKYAEEAKVAVRNVRRDSNDDLKKLEKAGDITEDDLRGYTEDIQKETDKYIAKVDEIAKNKEKEIMEV.

The protein belongs to the RRF family.

It is found in the cytoplasm. Its function is as follows. Responsible for the release of ribosomes from messenger RNA at the termination of protein biosynthesis. May increase the efficiency of translation by recycling ribosomes from one round of translation to another. This is Ribosome-recycling factor from Bacillus mycoides (strain KBAB4) (Bacillus weihenstephanensis).